The sequence spans 208 residues: Protein GrpE (208 aa).

Basic and acidic residues predominate over residues 1 to 25; it reads MVDNKDFNEELKESIQEELDNETKS. A disordered region spans residues 1–38; it reads MVDNKDFNEELKESIQEELDNETKSENPNIDEEVEEVS. Over residues 29–38 the composition is skewed to acidic residues; that stretch reads NIDEEVEEVS.

Belongs to the GrpE family. As to quaternary structure, homodimer.

It localises to the cytoplasm. Its function is as follows. Participates actively in the response to hyperosmotic and heat shock by preventing the aggregation of stress-denatured proteins, in association with DnaK and GrpE. It is the nucleotide exchange factor for DnaK and may function as a thermosensor. Unfolded proteins bind initially to DnaJ; upon interaction with the DnaJ-bound protein, DnaK hydrolyzes its bound ATP, resulting in the formation of a stable complex. GrpE releases ADP from DnaK; ATP binding to DnaK triggers the release of the substrate protein, thus completing the reaction cycle. Several rounds of ATP-dependent interactions between DnaJ, DnaK and GrpE are required for fully efficient folding. In Clostridium perfringens (strain SM101 / Type A), this protein is Protein GrpE.